We begin with the raw amino-acid sequence, 514 residues long: Periplasmic [NiFeSe] hydrogenase large subunit (514 aa).

Residue E52 participates in Fe cation binding. Ni(2+) is bound by residues C71 and C74. C74 and I445 together coordinate Fe cation. 2 residues coordinate Ni(2+): U493 and C496. Residue U493 is a non-standard amino acid, selenocysteine. Positions 496 and 499 each coordinate Fe cation.

This sequence belongs to the [NiFe]/[NiFeSe] hydrogenase large subunit family. Heterodimer of a large and a small subunit. Fe cation is required as a cofactor. Requires Ni(2+) as cofactor.

The protein localises to the periplasm. It carries out the reaction H2 + A = AH2. The chain is Periplasmic [NiFeSe] hydrogenase large subunit from Desulfomicrobium baculatum (Desulfovibrio baculatus).